The sequence spans 495 residues: Prenylcysteine oxidase 1-like (495 aa).

The first 22 residues, 1–22 (MARAAPLLAVLATVLTTAAAGG), serve as a signal peptide directing secretion. N-linked (GlcNAc...) asparagine glycans are attached at residues asparagine 185 and asparagine 343.

It belongs to the prenylcysteine oxidase family. Requires FAD as cofactor.

Its subcellular location is the secreted. Likely to have oxidoreductase activity. Required in the mevalonate pathway to regulate prenylation and enhances the bactericidal activity of neutrophils. In Mus musculus (Mouse), this protein is Prenylcysteine oxidase 1-like (Pcyox1l).